Reading from the N-terminus, the 333-residue chain is GTPase Obg (333 aa).

One can recognise an Obg domain in the interval 1–159 (MQFIDLAEIH…RHLRLELKLL (159 aa)). The region spanning 160-328 (AEVGIIGLPN…LLEAVWQELG (169 aa)) is the OBG-type G domain. GTP contacts are provided by residues 166-173 (GLPNAGKS), 191-195 (FTTLV), 213-216 (DIPG), 280-283 (NKID), and 309-311 (SAV). Residues Ser-173 and Thr-193 each coordinate Mg(2+).

Belongs to the TRAFAC class OBG-HflX-like GTPase superfamily. OBG GTPase family. Monomer. Mg(2+) is required as a cofactor.

The protein resides in the cytoplasm. An essential GTPase which binds GTP, GDP and possibly (p)ppGpp with moderate affinity, with high nucleotide exchange rates and a fairly low GTP hydrolysis rate. Plays a role in control of the cell cycle, stress response, ribosome biogenesis and in those bacteria that undergo differentiation, in morphogenesis control. The sequence is that of GTPase Obg from Thermosynechococcus vestitus (strain NIES-2133 / IAM M-273 / BP-1).